The following is a 365-amino-acid chain: Phenoloxidase-activating factor 1 (365 aa).

The N-terminal stretch at 1-23 (MKQVHFFILWFFVLNLYSIKAQA) is a signal peptide. The Clip domain maps to 24 to 74 (GCRTPNGENARCVPINNCKILYDSVLTSDPEVIRFLRASQCGYNGQPLVCC). Cystine bridges form between Cys25–Cys73, Cys35–Cys64, Cys41–Cys74, Cys101–Cys240, Cys140–Cys156, Cys184–Cys191, Cys284–Cys301, and Cys311–Cys340. In terms of domain architecture, Peptidase S1 spans 110-364 (ILNGDDTVPE…YRDWIEGNIR (255 aa)). The N-linked (GlcNAc...) asparagine glycan is linked to Asn131. The active-site Charge relay system is the His155. 4 residues coordinate Ca(2+): Glu175, Asn177, Thr180, and Asp183. The Charge relay system role is filled by Asp220. The active-site Charge relay system is Ser315.

The protein belongs to the peptidase S1 family. CLIP subfamily. As to quaternary structure, in the active form, heterodimer of a light chain and a heavy chain; disulfide-linked. In terms of processing, cleaved following the recognition of pathogen-derived products, probably by a lysyl endopeptidase.

It is found in the secreted. With respect to regulation, protein stability and endopeptidase activity are calcium dependent. First cleavage on prophenoloxidase PPO1 and PPO2 is not dependent on calcium; however, cleavage of PPO1 and PPO2 to their active forms is dependent on calcium and on the presence of PPAF2 and PPAF3. Cleavage of PPAF2 is inhibited by calcium. Inhibited by ethylenediaminetetraacetic acid (EDTA), p-nitrophenyl-p'-guanido-benzoate, diisopropylphosphorofluoridate (iPr2PF) and p-(Amidinophenyl)methanesulfonyl fluoride (p-APMSF). Functionally, serine endopeptidase which, by cleaving prophenoloxidase PPO1 and PPO2, is required for the activation of the prophenoloxidase cascade probably following the recognition of pathogen-derived products. The sequence is that of Phenoloxidase-activating factor 1 from Holotrichia diomphalia (Korean black chafer).